Consider the following 507-residue polypeptide: Heat shock 70 kDa protein 14-B (507 aa).

Belongs to the heat shock protein 70 family. Component of ribosome-associated complex (RAC).

The protein resides in the cytoplasm. It is found in the cytosol. In terms of biological role, component of the ribosome-associated complex (RAC), a complex involved in folding or maintaining nascent polypeptides in a folding-competent state. The protein is Heat shock 70 kDa protein 14-B (hspa14-b) of Xenopus laevis (African clawed frog).